The primary structure comprises 536 residues: Membrane protein insertase YidC (536 aa).

Helical transmembrane passes span 5–25 (LIIA…IFPT), 353–373 (GNYG…FFPL), 418–438 (VNPL…FGLY), and 495–515 (MLML…GLVI).

The protein belongs to the OXA1/ALB3/YidC family. Type 1 subfamily. Interacts with the Sec translocase complex via SecD. Specifically interacts with transmembrane segments of nascent integral membrane proteins during membrane integration.

It is found in the cell inner membrane. Its function is as follows. Required for the insertion and/or proper folding and/or complex formation of integral membrane proteins into the membrane. Involved in integration of membrane proteins that insert both dependently and independently of the Sec translocase complex, as well as at least some lipoproteins. Aids folding of multispanning membrane proteins. The polypeptide is Membrane protein insertase YidC (Geobacter sp. (strain M21)).